The following is a 146-amino-acid chain: Hut operon positive regulatory protein (146 aa).

Belongs to the HutP family. Homohexamer.

Its function is as follows. Antiterminator that binds to cis-acting regulatory sequences on the mRNA in the presence of histidine, thereby suppressing transcription termination and activating the hut operon for histidine utilization. The protein is Hut operon positive regulatory protein of Bacillus cytotoxicus (strain DSM 22905 / CIP 110041 / 391-98 / NVH 391-98).